A 163-amino-acid chain; its full sequence is Nitrogen regulatory protein (163 aa).

The PTS EIIA type-2 domain maps to 12–156 (SVLNRECTRS…EELYQIITDT (145 aa)). The active-site Tele-phosphohistidine intermediate is the His-73.

The protein resides in the cytoplasm. Seems to have a role in regulating nitrogen assimilation. The sequence is that of Nitrogen regulatory protein (ptsN) from Escherichia coli (strain K12).